The primary structure comprises 141 residues: Nucleoside diphosphate kinase (141 aa).

ATP-binding residues include Lys11, Phe59, Arg87, Thr93, Arg104, and Asn114.

Belongs to the NDK family. Homotetramer. Mg(2+) serves as cofactor.

The protein resides in the cytoplasm. It catalyses the reaction a 2'-deoxyribonucleoside 5'-diphosphate + ATP = a 2'-deoxyribonucleoside 5'-triphosphate + ADP. It carries out the reaction a ribonucleoside 5'-diphosphate + ATP = a ribonucleoside 5'-triphosphate + ADP. Its function is as follows. Major role in the synthesis of nucleoside triphosphates other than ATP. The ATP gamma phosphate is transferred to the NDP beta phosphate via a ping-pong mechanism, using a phosphorylated active-site intermediate. The sequence is that of Nucleoside diphosphate kinase from Saccharophagus degradans (strain 2-40 / ATCC 43961 / DSM 17024).